A 262-amino-acid chain; its full sequence is Acyl-[acyl-carrier-protein]--UDP-N-acetylglucosamine O-acyltransferase (262 aa).

The protein belongs to the transferase hexapeptide repeat family. LpxA subfamily. In terms of assembly, homotrimer.

It is found in the cytoplasm. The enzyme catalyses a (3R)-hydroxyacyl-[ACP] + UDP-N-acetyl-alpha-D-glucosamine = a UDP-3-O-[(3R)-3-hydroxyacyl]-N-acetyl-alpha-D-glucosamine + holo-[ACP]. It participates in glycolipid biosynthesis; lipid IV(A) biosynthesis; lipid IV(A) from (3R)-3-hydroxytetradecanoyl-[acyl-carrier-protein] and UDP-N-acetyl-alpha-D-glucosamine: step 1/6. Involved in the biosynthesis of lipid A, a phosphorylated glycolipid that anchors the lipopolysaccharide to the outer membrane of the cell. This is Acyl-[acyl-carrier-protein]--UDP-N-acetylglucosamine O-acyltransferase from Enterobacter sp. (strain 638).